A 94-amino-acid polypeptide reads, in one-letter code: Cell division protein FtsB (94 aa).

Residues 1–3 (MRT) are Cytoplasmic-facing. Residues 4–21 (FAIFLLIALGWLQYTLWF) form a helical membrane-spanning segment. The Periplasmic segment spans residues 22–94 (GKNGMSDYAQ…YRIIDENSEG (73 aa)). Residues 33–71 (SNDVALQEEVNQGLRNRNEQMFAEIDDLKKGSEAIEERA) adopt a coiled-coil conformation.

This sequence belongs to the FtsB family. In terms of assembly, part of a complex composed of FtsB, FtsL and FtsQ.

Its subcellular location is the cell inner membrane. Functionally, essential cell division protein. May link together the upstream cell division proteins, which are predominantly cytoplasmic, with the downstream cell division proteins, which are predominantly periplasmic. This is Cell division protein FtsB from Aliivibrio fischeri (strain ATCC 700601 / ES114) (Vibrio fischeri).